The sequence spans 553 residues: Transcription factor IIIB 70 kDa subunit (553 aa).

The TFIIB-type zinc-finger motif lies at 6 to 39 (KQQKCKTCGHTQFDVNRYTAAGDVSCLRCGTVLE). Zn(2+) contacts are provided by cysteine 10, cysteine 13, cysteine 31, and cysteine 34. Tandem repeats lie at residues 98–174 (IAAA…KMVK) and 193–272 (FVEK…EFKK). An interaction with TBP and with the Pol III subunit C34 region spans residues 98-272 (IAAALKIPDY…LQRRLNEFKK (175 aa)). The interaction with TBP stretch occupies residues 281–553 (KSFREVENLE…KGLLGGNMGF (273 aa)). A disordered region spans residues 473-523 (KQEADELTGNTSKSSSGNRRKRNKSSLPAELRKELGDIDLDEDGTPRSAAD). Residues 480–489 (TGNTSKSSSG) show a composition bias toward low complexity.

The protein belongs to the TFIIB family. In terms of assembly, TFIIIB comprises the TATA-binding protein (TBP), the B-related factor (BRF) and a 70 kDa polypeptide.

The protein resides in the nucleus. Its function is as follows. General activator of RNA polymerase III transcription. Interacts with TBP. Binds to Pol III subunit C34 and to the TAU135 component of TFIIIC. The polypeptide is Transcription factor IIIB 70 kDa subunit (TDS4) (Candida albicans (strain SC5314 / ATCC MYA-2876) (Yeast)).